Reading from the N-terminus, the 204-residue chain is ATP phosphoribosyltransferase (204 aa).

The protein belongs to the ATP phosphoribosyltransferase family. Short subfamily. As to quaternary structure, heteromultimer composed of HisG and HisZ subunits.

Its subcellular location is the cytoplasm. It catalyses the reaction 1-(5-phospho-beta-D-ribosyl)-ATP + diphosphate = 5-phospho-alpha-D-ribose 1-diphosphate + ATP. It participates in amino-acid biosynthesis; L-histidine biosynthesis; L-histidine from 5-phospho-alpha-D-ribose 1-diphosphate: step 1/9. Catalyzes the condensation of ATP and 5-phosphoribose 1-diphosphate to form N'-(5'-phosphoribosyl)-ATP (PR-ATP). Has a crucial role in the pathway because the rate of histidine biosynthesis seems to be controlled primarily by regulation of HisG enzymatic activity. This chain is ATP phosphoribosyltransferase, found in Leptospira biflexa serovar Patoc (strain Patoc 1 / Ames).